A 144-amino-acid chain; its full sequence is Histone H2A.Z (144 aa).

Over residues 1-18 (MPGGKGKSSGGKSSGGKT) the composition is skewed to gly residues. A disordered region spans residues 1–36 (MPGGKGKSSGGKSSGGKTSGTEGANKKQQSHSARAG). An N6-acetyllysine mark is found at lysine 5 and lysine 12.

This sequence belongs to the histone H2A family. In terms of assembly, the nucleosome is a histone octamer containing two molecules each of H2A, H2B, H3 and H4 assembled in one H3-H4 heterotetramer and two H2A-H2B heterodimers. The octamer wraps approximately 147 bp of DNA. H2A or its variant H2A.Z forms a heterodimer with H2B. H2A.Z associates with the VPS72/SWC2 subunit of the SWR1 chromatin remodeling complex. Also interacts with RBP1/DNA-directed RNA polymerase II largest subunit. Post-translationally, acetylated once deposited into chromatin.

It localises to the nucleus. It is found in the chromosome. In terms of biological role, variant histone H2A which can replace H2A in some nucleosomes. Nucleosomes wrap and compact DNA into chromatin, limiting DNA accessibility to the cellular machineries which require DNA as a template. Histones thereby play a central role in transcription regulation, DNA repair, DNA replication and chromosomal stability. DNA accessibility is regulated via a complex set of post-translational modifications of histones, also called histone code, and nucleosome remodeling. This variant is enriched at promoters, it may keep them in a repressed state until the appropriate activation signal is received. Near telomeres, it may counteract gene silencing caused by the spread of heterochromatin proteins. Required for the RNA polymerase II and SPT15/TBP recruitment to the target genes. Involved in chromosome stability. This chain is Histone H2A.Z (HTZ1), found in Gibberella zeae (strain ATCC MYA-4620 / CBS 123657 / FGSC 9075 / NRRL 31084 / PH-1) (Wheat head blight fungus).